The sequence spans 167 residues: Lipoprotein signal peptidase (167 aa).

The next 4 helical transmembrane spans lie at Thr8–Leu28, Trp46–Phe66, Gln68–Leu88, and Ile101–Gly121. Residues Asp125 and Asp143 contribute to the active site. Residues Phe139–Phe159 traverse the membrane as a helical segment.

The protein belongs to the peptidase A8 family.

The protein localises to the cell inner membrane. The enzyme catalyses Release of signal peptides from bacterial membrane prolipoproteins. Hydrolyzes -Xaa-Yaa-Zaa-|-(S,diacylglyceryl)Cys-, in which Xaa is hydrophobic (preferably Leu), and Yaa (Ala or Ser) and Zaa (Gly or Ala) have small, neutral side chains.. It functions in the pathway protein modification; lipoprotein biosynthesis (signal peptide cleavage). This protein specifically catalyzes the removal of signal peptides from prolipoproteins. This Chlamydia trachomatis serovar L2 (strain ATCC VR-902B / DSM 19102 / 434/Bu) protein is Lipoprotein signal peptidase.